The chain runs to 346 residues: N-acetyl-gamma-glutamyl-phosphate reductase (346 aa).

The active site involves cysteine 149.

It belongs to the NAGSA dehydrogenase family. Type 1 subfamily.

The protein resides in the cytoplasm. It catalyses the reaction N-acetyl-L-glutamate 5-semialdehyde + phosphate + NADP(+) = N-acetyl-L-glutamyl 5-phosphate + NADPH + H(+). It participates in amino-acid biosynthesis; L-arginine biosynthesis; N(2)-acetyl-L-ornithine from L-glutamate: step 3/4. Its function is as follows. Catalyzes the NADPH-dependent reduction of N-acetyl-5-glutamyl phosphate to yield N-acetyl-L-glutamate 5-semialdehyde. The polypeptide is N-acetyl-gamma-glutamyl-phosphate reductase (Citrifermentans bemidjiense (strain ATCC BAA-1014 / DSM 16622 / JCM 12645 / Bem) (Geobacter bemidjiensis)).